A 354-amino-acid polypeptide reads, in one-letter code: Uroporphyrinogen decarboxylase (354 aa).

Substrate-binding positions include 27–31 (RQAGR), Asp-77, Tyr-154, Ser-209, and His-327.

It belongs to the uroporphyrinogen decarboxylase family. As to quaternary structure, homodimer.

It localises to the cytoplasm. The enzyme catalyses uroporphyrinogen III + 4 H(+) = coproporphyrinogen III + 4 CO2. It functions in the pathway porphyrin-containing compound metabolism; protoporphyrin-IX biosynthesis; coproporphyrinogen-III from 5-aminolevulinate: step 4/4. Catalyzes the decarboxylation of four acetate groups of uroporphyrinogen-III to yield coproporphyrinogen-III. This chain is Uroporphyrinogen decarboxylase, found in Pseudomonas syringae pv. syringae (strain B728a).